A 294-amino-acid polypeptide reads, in one-letter code: Putative ribose uptake protein RbsU (294 aa).

Helical transmembrane passes span 2–24 (NAVNILIGLMPMIGWGIFPVIVG), 34–56 (ILGTTFGTLILAIVVAIFRGTPI), 63–82 (IFCLISGACWALAQIITFHV), 92–114 (MPITTGFQLVGASLWGVFVLGNW), 121–140 (LIGFTAIALIIIGVYLTAWS), 150–172 (GAVKGILLLLVGELGYLGYSAFP), 179–198 (GFQGFLPQAIGMTIVGIIFG), 218–235 (IFSGFFFAFAALTYLISA), 242–264 (LATGFVLSQTSVIFATIGGIYIL), and 274–293 (IAVMVGLLLVLVAGSVTAFI).

The protein belongs to the GRP transporter (TC 2.A.7.5) family.

It localises to the cell membrane. Its function is as follows. Could be involved in the uptake of ribose. The chain is Putative ribose uptake protein RbsU (rbsU) from Latilactobacillus sakei subsp. sakei (strain 23K) (Lactobacillus sakei subsp. sakei).